The sequence spans 320 residues: tRNA dimethylallyltransferase (320 aa).

Position 17 to 24 (17 to 24 (GPTASGKT)) interacts with ATP. 19–24 (TASGKT) contacts substrate. 3 interaction with substrate tRNA regions span residues 42-45 (DSAL), 166-170 (QRIQR), and 249-254 (RCVGYR).

The protein belongs to the IPP transferase family. In terms of assembly, monomer. It depends on Mg(2+) as a cofactor.

It catalyses the reaction adenosine(37) in tRNA + dimethylallyl diphosphate = N(6)-dimethylallyladenosine(37) in tRNA + diphosphate. Its function is as follows. Catalyzes the transfer of a dimethylallyl group onto the adenine at position 37 in tRNAs that read codons beginning with uridine, leading to the formation of N6-(dimethylallyl)adenosine (i(6)A). This is tRNA dimethylallyltransferase from Herminiimonas arsenicoxydans.